The primary structure comprises 580 residues: E3 ubiquitin-protein ligase TRIM45 (580 aa).

Residues 29–98 form an RING-type zinc finger; the sequence is CPTCLRLFKV…QIGILCPVCD (70 aa). B box-type zinc fingers lie at residues 130–176 and 186–227; these read GQGL…MVDL and GKPI…YDFT. The Zn(2+) site is built by C135, C138, C158, H162, C191, H194, C214, and H219. Positions 249–329 form a coiled coil; it reads VEALEDALAQ…LLADMRTGVE (81 aa). The stretch at 394 to 497 is one Filamin repeat; sequence TQEVDPAQCV…VQGSPFNVTV (104 aa).

The protein belongs to the TRIM/RBCC family.

Its subcellular location is the cytoplasm. It localises to the nucleus. The catalysed reaction is S-ubiquitinyl-[E2 ubiquitin-conjugating enzyme]-L-cysteine + [acceptor protein]-L-lysine = [E2 ubiquitin-conjugating enzyme]-L-cysteine + N(6)-ubiquitinyl-[acceptor protein]-L-lysine.. E3 ubiquitin-protein ligase that plays a role in the regulation of inflammatory response. Mechanistically, mediates the 'Lys-48'-linked polyubiquitination of TAB2, a regulatory protein of the kinase TAK1, leading to its degradation via the proteasomal pathway and inhibition of the TLR-mediated inflammatory immune response. May act as a transcriptional repressor in mitogen-activated protein kinase signaling pathway. This is E3 ubiquitin-protein ligase TRIM45 (Trim45) from Mus musculus (Mouse).